A 545-amino-acid chain; its full sequence is Coiled-coil domain-containing protein 60 (545 aa).

Residues 72–99 (NILREENAMKKKQQLLQKLKEEELNKFQ) adopt a coiled-coil conformation. Residues 224–284 (PAIRTAMASR…DNESSSTKPE (61 aa)) form a disordered region. Residues 238–259 (RGSTLSLTRTSGGSSPQSSMMS) are compositionally biased toward low complexity.

This Mus musculus (Mouse) protein is Coiled-coil domain-containing protein 60 (Ccdc60).